Here is a 426-residue protein sequence, read N- to C-terminus: Serine--tRNA ligase (426 aa).

231-233 (TAE) contributes to the L-serine binding site. Residue 262–264 (RSE) participates in ATP binding. L-serine is bound at residue Glu285. 349–352 (EISS) is an ATP binding site. Residue Ser384 participates in L-serine binding.

Belongs to the class-II aminoacyl-tRNA synthetase family. Type-1 seryl-tRNA synthetase subfamily. As to quaternary structure, homodimer. The tRNA molecule binds across the dimer.

It is found in the cytoplasm. The catalysed reaction is tRNA(Ser) + L-serine + ATP = L-seryl-tRNA(Ser) + AMP + diphosphate + H(+). It carries out the reaction tRNA(Sec) + L-serine + ATP = L-seryl-tRNA(Sec) + AMP + diphosphate + H(+). Its pathway is aminoacyl-tRNA biosynthesis; selenocysteinyl-tRNA(Sec) biosynthesis; L-seryl-tRNA(Sec) from L-serine and tRNA(Sec): step 1/1. Catalyzes the attachment of serine to tRNA(Ser). Is also able to aminoacylate tRNA(Sec) with serine, to form the misacylated tRNA L-seryl-tRNA(Sec), which will be further converted into selenocysteinyl-tRNA(Sec). This Laribacter hongkongensis (strain HLHK9) protein is Serine--tRNA ligase.